A 358-amino-acid chain; its full sequence is sn-glycerol-3-phosphate import ATP-binding protein UgpC (358 aa).

Residues 4-235 (VELKQVRKTY…PATLFVASFI (232 aa)) form the ABC transporter domain. 37–44 (GPSGCGKS) lines the ATP pocket.

Belongs to the ABC transporter superfamily. sn-glycerol-3-phosphate importer (TC 3.A.1.1.3) family. As to quaternary structure, the complex is composed of two ATP-binding proteins (UgpC), two transmembrane proteins (UgpA and UgpE) and a solute-binding protein (UgpB).

The protein localises to the cell inner membrane. The catalysed reaction is sn-glycerol 3-phosphate(out) + ATP + H2O = sn-glycerol 3-phosphate(in) + ADP + phosphate + H(+). In terms of biological role, part of the ABC transporter complex UgpBAEC involved in sn-glycerol-3-phosphate (G3P) import. Responsible for energy coupling to the transport system. The polypeptide is sn-glycerol-3-phosphate import ATP-binding protein UgpC (Roseobacter denitrificans (strain ATCC 33942 / OCh 114) (Erythrobacter sp. (strain OCh 114))).